The following is a 240-amino-acid chain: 2,3,4,5-tetrahydropyridine-2,6-dicarboxylate N-acetyltransferase (240 aa).

The protein belongs to the transferase hexapeptide repeat family. DapH subfamily.

The catalysed reaction is (S)-2,3,4,5-tetrahydrodipicolinate + acetyl-CoA + H2O = L-2-acetamido-6-oxoheptanedioate + CoA. It functions in the pathway amino-acid biosynthesis; L-lysine biosynthesis via DAP pathway; LL-2,6-diaminopimelate from (S)-tetrahydrodipicolinate (acetylase route): step 1/3. Functionally, catalyzes the transfer of an acetyl group from acetyl-CoA to tetrahydrodipicolinate. The polypeptide is 2,3,4,5-tetrahydropyridine-2,6-dicarboxylate N-acetyltransferase (Staphylococcus epidermidis (strain ATCC 12228 / FDA PCI 1200)).